The chain runs to 285 residues: 2-dehydro-3-deoxyphosphooctonate aldolase (285 aa).

Belongs to the KdsA family.

The protein resides in the cytoplasm. It catalyses the reaction D-arabinose 5-phosphate + phosphoenolpyruvate + H2O = 3-deoxy-alpha-D-manno-2-octulosonate-8-phosphate + phosphate. It functions in the pathway carbohydrate biosynthesis; 3-deoxy-D-manno-octulosonate biosynthesis; 3-deoxy-D-manno-octulosonate from D-ribulose 5-phosphate: step 2/3. Its pathway is bacterial outer membrane biogenesis; lipopolysaccharide biosynthesis. The sequence is that of 2-dehydro-3-deoxyphosphooctonate aldolase from Bordetella bronchiseptica (strain ATCC BAA-588 / NCTC 13252 / RB50) (Alcaligenes bronchisepticus).